Reading from the N-terminus, the 270-residue chain is Chlorophyll a-b binding protein, chloroplastic (270 aa).

A chloroplast-targeting transit peptide spans 1–41 (MASACASSTIAAVAFSSPSSQKNGSIVGATKASFLGGKRLR). Trp-68 contacts chlorophyll b. 3 residues coordinate chlorophyll a: Phe-88, Glu-107, and His-110. Arg-112 lines the chlorophyll b pocket. Residues 113–133 (WAMLGAAGIFIPEFLTKIGVL) form a helical membrane-spanning segment. A chlorophyll a-binding site is contributed by Gln-144. Residues 146-166 (YFTDTTTLFVIELVLIGWAEG) traverse the membrane as a helical segment. Chlorophyll b is bound by residues Val-155, Glu-165, and Arg-168. Residues Lys-221, Glu-222, Asn-225, Arg-227, Gln-239, and His-254 each coordinate chlorophyll a. The chain crosses the membrane as a helical span at residues 228-248 (LAMLAVMGAWFQHIYTGTGPI).

Belongs to the light-harvesting chlorophyll a/b-binding (LHC) protein family. As to quaternary structure, the LHC complex consists of chlorophyll a-b binding proteins. Binds at least 14 chlorophylls (8 Chl-a and 6 Chl-b) and carotenoids such as lutein and neoxanthin. serves as cofactor. In terms of processing, photoregulated by reversible phosphorylation of its threonine residues.

The protein localises to the plastid. Its subcellular location is the chloroplast thylakoid membrane. Functionally, the light-harvesting complex (LHC) functions as a light receptor, it captures and delivers excitation energy to photosystems with which it is closely associated. The sequence is that of Chlorophyll a-b binding protein, chloroplastic from Petunia hybrida (Petunia).